Consider the following 610-residue polypeptide: NTPase KAP family P-loop domain-containing protein 1 (610 aa).

The KAP NTPase domain occupies 1-414 (MQQEAAQRES…NTVPITVRLL (414 aa)). The next 3 membrane-spanning stretches (helical) occupy residues 22-42 (AVSG…QPII), 118-138 (VCLG…LLYL), and 157-177 (VFGG…VYSV). The disordered stretch occupies residues 540-587 (ALKPPSPPKSPTRDTPHAAHRANSASRAPPSGRASGQAGEGHHTGDLA). Over residues 560–575 (RANSASRAPPSGRASG) the composition is skewed to low complexity.

It localises to the membrane. This chain is NTPase KAP family P-loop domain-containing protein 1 (NKPD1), found in Homo sapiens (Human).